We begin with the raw amino-acid sequence, 342 residues long: Holliday junction branch migration complex subunit RuvB (342 aa).

The interval 1–184 (MEENFDIREQ…FGINLHLEYY (184 aa)) is large ATPase domain (RuvB-L). Residues L23, R24, G65, K68, T69, T70, 131-133 (EDY), R174, Y184, and R221 contribute to the ATP site. T69 contacts Mg(2+). A small ATPAse domain (RuvB-S) region spans residues 185-255 (DDDVLTSIIR…IARFALEALN (71 aa)). Residues 258 to 342 (RYGLDEIDNK…YNSQKTLFDD (85 aa)) form a head domain (RuvB-H) region. DNA-binding residues include R313 and R318.

This sequence belongs to the RuvB family. Homohexamer. Forms an RuvA(8)-RuvB(12)-Holliday junction (HJ) complex. HJ DNA is sandwiched between 2 RuvA tetramers; dsDNA enters through RuvA and exits via RuvB. An RuvB hexamer assembles on each DNA strand where it exits the tetramer. Each RuvB hexamer is contacted by two RuvA subunits (via domain III) on 2 adjacent RuvB subunits; this complex drives branch migration. In the full resolvosome a probable DNA-RuvA(4)-RuvB(12)-RuvC(2) complex forms which resolves the HJ.

The protein localises to the cytoplasm. It catalyses the reaction ATP + H2O = ADP + phosphate + H(+). In terms of biological role, the RuvA-RuvB-RuvC complex processes Holliday junction (HJ) DNA during genetic recombination and DNA repair, while the RuvA-RuvB complex plays an important role in the rescue of blocked DNA replication forks via replication fork reversal (RFR). RuvA specifically binds to HJ cruciform DNA, conferring on it an open structure. The RuvB hexamer acts as an ATP-dependent pump, pulling dsDNA into and through the RuvAB complex. RuvB forms 2 homohexamers on either side of HJ DNA bound by 1 or 2 RuvA tetramers; 4 subunits per hexamer contact DNA at a time. Coordinated motions by a converter formed by DNA-disengaged RuvB subunits stimulates ATP hydrolysis and nucleotide exchange. Immobilization of the converter enables RuvB to convert the ATP-contained energy into a lever motion, pulling 2 nucleotides of DNA out of the RuvA tetramer per ATP hydrolyzed, thus driving DNA branch migration. The RuvB motors rotate together with the DNA substrate, which together with the progressing nucleotide cycle form the mechanistic basis for DNA recombination by continuous HJ branch migration. Branch migration allows RuvC to scan DNA until it finds its consensus sequence, where it cleaves and resolves cruciform DNA. In Phocaeicola vulgatus (strain ATCC 8482 / DSM 1447 / JCM 5826 / CCUG 4940 / NBRC 14291 / NCTC 11154) (Bacteroides vulgatus), this protein is Holliday junction branch migration complex subunit RuvB.